We begin with the raw amino-acid sequence, 317 residues long: Adenine deaminase (317 aa).

Residues H14, H16, and H194 each contribute to the Zn(2+) site. Catalysis depends on E197, which acts as the Proton donor. D275 provides a ligand contact to Zn(2+). Residue D276 coordinates substrate.

It belongs to the metallo-dependent hydrolases superfamily. Adenosine and AMP deaminases family. Adenine deaminase type 2 subfamily. Zn(2+) is required as a cofactor.

It catalyses the reaction adenine + H2O + H(+) = hypoxanthine + NH4(+). Its function is as follows. Catalyzes the hydrolytic deamination of adenine to hypoxanthine. Plays an important role in the purine salvage pathway and in nitrogen catabolism. This Pseudomonas savastanoi pv. phaseolicola (strain 1448A / Race 6) (Pseudomonas syringae pv. phaseolicola (strain 1448A / Race 6)) protein is Adenine deaminase.